Reading from the N-terminus, the 683-residue chain is Synaptic vesicle glycoprotein 2B (683 aa).

The tract at residues 1 to 42 is disordered; sequence MDDYKYQDNYGGYAPSDGYYRGNESNPEEDAQSDVTEGHDEE. Topologically, residues 1-108 are cytoplasmic; sequence MDDYKYQDNY…MDECGHGRFQ (108 aa). Serine 33 carries the phosphoserine modification. Threonine 36 carries the phosphothreonine modification. Residues 109–129 traverse the membrane as a helical segment; that stretch reads WILFFVLGLALMADGVEVFVV. The Extracellular portion of the chain corresponds to 130–148; the sequence is SFALPSAEKDMCLSSSKKG. Residues 149–169 traverse the membrane as a helical segment; that stretch reads MLGMIVYLGMMAGAFILGGLA. Residues 170-182 lie on the Cytoplasmic side of the membrane; sequence DKLGRKRVLSMSL. A helical transmembrane segment spans residues 183–203; the sequence is AVNASFASLSSFVQGYGAFLF. Residues 204-205 lie on the Extracellular side of the membrane; sequence CR. Residues 206–226 form a helical membrane-spanning segment; sequence LISGIGIGGALPIVFAYFSEF. Over 227–237 the chain is Cytoplasmic; sequence LSREKRGEHLS. Residues 238–258 traverse the membrane as a helical segment; it reads WLGIFWMTGGLYASAMAWSII. Topologically, residues 259 to 277 are extracellular; sequence PHYGWGFSMGTNYHFHSWR. A helical transmembrane segment spans residues 278–298; sequence VFVIVCALPCTVSMVALKFMP. Residues 299–390 are Cytoplasmic-facing; sequence ESPRFLLEMG…CVMGPYRMNT (92 aa). Residues 391–411 form a helical membrane-spanning segment; that stretch reads LILAVVWFAMAFSYYGLTVWF. Residues 412–535 are Extracellular-facing; that stretch reads PDMIRYFQDE…CHMDLEQDND (124 aa). Position 423 is a phosphotyrosine (tyrosine 423). Asparagine 441, asparagine 491, and asparagine 516 each carry an N-linked (GlcNAc...) asparagine glycan. Residues 536 to 556 traverse the membrane as a helical segment; it reads FLIYLVSFLGSLSVLPGNIIS. Topologically, residues 557 to 565 are cytoplasmic; sequence ALLMDRIGR. A helical membrane pass occupies residues 566-586; that stretch reads LKMIGGSMLISAVCCFFLFFG. Topologically, residues 587–592 are extracellular; sequence NSESAM. The chain crosses the membrane as a helical span at residues 593-613; that stretch reads IGWQCLFCGTSIAAWNALDVI. The Cytoplasmic portion of the chain corresponds to 614–626; it reads TVELYPTNQRATA. The helical transmembrane segment at 627–649 threads the bilayer; that stretch reads FGILNGLCKFGAILGNTIFASFV. The Extracellular segment spans residues 650–653; that stretch reads GITK. A helical membrane pass occupies residues 654–672; it reads VVPILLAAASLVGGGLIAL. At 673–683 the chain is on the cytoplasmic side; the sequence is RLPETREQVLM.

This sequence belongs to the major facilitator superfamily. Interacts with SYT1 in a calcium-independent manner. Forms a complex with SYT1, syntaxin-1 and SNAP25. As to quaternary structure, (Microbial infection) Interacts with C.botulinum neurotoxin type A2 (BoNT/A, botA). Interaction is improved by glycosylation of SV2. In terms of processing, N-glycosylated. Post-translationally, the N-terminal cytoplasmic domain is phosphorylated by CK1.

The protein resides in the cytoplasmic vesicle. Its subcellular location is the secretory vesicle. It is found in the synaptic vesicle membrane. The protein localises to the acrosome. Probably plays a role in the control of regulated secretion in neural and endocrine cells. Its function is as follows. (Microbial infection) Receptor for the C.botulinum neurotoxin type A2 (BoNT/A, botA); glycosylation is not essential but enhances the interaction. Probably also serves as a receptor for the closely related C.botulinum neurotoxin type A1. The sequence is that of Synaptic vesicle glycoprotein 2B (SV2B) from Homo sapiens (Human).